The sequence spans 66 residues: Large ribosomal subunit protein bL33c (66 aa).

It belongs to the bacterial ribosomal protein bL33 family.

Its subcellular location is the plastid. The protein localises to the chloroplast. In Cicer arietinum (Chickpea), this protein is Large ribosomal subunit protein bL33c.